The primary structure comprises 419 residues: DNA-directed RNA polymerase I subunit RPA49 (419 aa).

Serine 35 and serine 163 each carry phosphoserine. Lysine 373 is modified (N6-acetyllysine). Residues 397 to 419 (GTLSLPLPPAQTSDRLAKRRKIT) are disordered.

The protein belongs to the eukaryotic RPA49/POLR1E RNA polymerase subunit family. In terms of assembly, component of the RNA polymerase I (Pol I) complex consisting of 13 subunits: a ten-subunit catalytic core composed of POLR1A/RPA1, POLR1B/RPA2, POLR1C/RPAC1, POLR1D/RPAC2, POLR1H/RPA12, POLR2E/RPABC1, POLR2F/RPABC2, POLR2H/RPABC3, POLR2K/RPABC4 and POLR2L/RPABC5; a mobile stalk subunit POLR1F/RPA43 protruding from the core and additional subunits homologous to general transcription factors POLR1E/RPA49 and POLR1G/RPA34. Forms a heterodimer with POLR1G/RPA34. Interacts with POLR1G. Also binds UBTF/UBF. Interacts with PWP1. Acetylated at Lys-373 by CREBBP/CBP, leading to decreased RNA polymerase I transcription. In normal conditions, deacetylated by SIRT7, promoting the association of RNA polymerase I with the rDNA promoter region and coding region. In response to stress, SIRT7 is released from nucleoli leading to hyperacetylation of POLR1E/PAF53 and decreased association of RNA polymerase I with the rDNA promoter region.

The protein resides in the nucleus. It localises to the nucleolus. Its function is as follows. Component of RNA polymerase I (Pol I), a DNA-dependent RNA polymerase which synthesizes ribosomal RNA precursors using the four ribonucleoside triphosphates as substrates. Appears to be involved in the formation of the initiation complex at the promoter by mediating the interaction between Pol I and UBTF/UBF. This chain is DNA-directed RNA polymerase I subunit RPA49 (POLR1E), found in Homo sapiens (Human).